The sequence spans 634 residues: Polyadenylate-binding protein 1A (634 aa).

4 RRM domains span residues 11-89, 99-175, 191-268, and 294-370; these read ASLY…WSQR, GNIF…RFKS, TNVY…RAQK, and VNLY…LAQR. Residues 541–618 enclose the PABC domain; the sequence is QEPLTASMLA…AVAVLQAHQA (78 aa).

Belongs to the polyadenylate-binding protein type-1 family. In terms of assembly, interacts with ybx1; interaction recruits pabpc1a on C5-methylcytosine (m5C)-containing mRNAs, preventing their degradation.

It localises to the cytoplasm. Functionally, binds the poly(A) tail of mRNA. Prevents mRNA deadenylation and confers poly(A) stability. Binds to N6-methyladenosine (m6A)-containing mRNAs. Stimulates the translation of mRNAs to which it is bound, acting, at least in part, with dazl. Involved in the maternal-to-zygotic transition in early embryo via interaction with ybx1: interaction recruits pabpc1a on C5-methylcytosine (m5C)-containing maternal mRNAs, preventing their degradation. This is Polyadenylate-binding protein 1A from Danio rerio (Zebrafish).